Here is a 249-residue protein sequence, read N- to C-terminus: MPQSPEQPDVSSTVSYNRVMLKISGEALMGTQGFGLHPPTVRRIAEEVKSVHDLGVEICMVIGGGNIFRGLSGSAQGMERTTADYMGMLATVMNALGMQSALEDLGVFTRVISAIRMDEVAEPYIRRRAVRHLEKKRVCIFAAGTGNPYFTTDTAATLRANEMNCEAIFMGKNGVDGVYDKDPKTNEDAKRYDSVSYDDVLAKRLKVMDASAIALARDNNLPLIVFGLDEPGGFRGVLAGEGTYTKVHG.

ATP is bound at residue 22–25 (KISG). The segment at 30–35 (GTQGFG) is involved in allosteric activation by GTP. A UMP-binding site is contributed by Gly-64. Gly-65 and Arg-69 together coordinate ATP. UMP-binding positions include Asp-84 and 145 to 152 (TGNPYFTT). ATP is bound by residues Asn-173, Tyr-179, and Asp-182.

The protein belongs to the UMP kinase family. Homohexamer.

It localises to the cytoplasm. It carries out the reaction UMP + ATP = UDP + ADP. Its pathway is pyrimidine metabolism; CTP biosynthesis via de novo pathway; UDP from UMP (UMPK route): step 1/1. With respect to regulation, allosterically activated by GTP. Inhibited by UTP. Functionally, catalyzes the reversible phosphorylation of UMP to UDP. This Ruegeria sp. (strain TM1040) (Silicibacter sp.) protein is Uridylate kinase.